We begin with the raw amino-acid sequence, 280 residues long: DegV domain-containing protein Mb2440c (280 aa).

Residues 3–274 (VVVVTDTSCR…AGAVGVCVDV (272 aa)) enclose the DegV domain. Position 89 (S89) interacts with hexadecanoate.

In terms of biological role, may bind long-chain fatty acids, such as palmitate, and may play a role in lipid transport or fatty acid metabolism. The protein is DegV domain-containing protein Mb2440c of Mycobacterium bovis (strain ATCC BAA-935 / AF2122/97).